Reading from the N-terminus, the 429-residue chain is Glucose-1-phosphate adenylyltransferase (429 aa).

Alpha-D-glucose 1-phosphate-binding positions include G162, 177–178, and S209; that span reads EK.

It belongs to the bacterial/plant glucose-1-phosphate adenylyltransferase family. In terms of assembly, homotetramer.

It carries out the reaction alpha-D-glucose 1-phosphate + ATP + H(+) = ADP-alpha-D-glucose + diphosphate. The protein operates within glycan biosynthesis; glycogen biosynthesis. Functionally, involved in the biosynthesis of ADP-glucose, a building block required for the elongation reactions to produce glycogen. Catalyzes the reaction between ATP and alpha-D-glucose 1-phosphate (G1P) to produce pyrophosphate and ADP-Glc. This Cyanothece sp. (strain PCC 7425 / ATCC 29141) protein is Glucose-1-phosphate adenylyltransferase.